A 394-amino-acid polypeptide reads, in one-letter code: Elongation factor Tu (394 aa).

One can recognise a tr-type G domain in the interval Lys10–Val204. Positions Gly19–Thr26 are G1. A GTP-binding site is contributed by Gly19–Thr26. Thr26 lines the Mg(2+) pocket. The segment at Gly60–Lys64 is G2. Residues Asp81–Gly84 form a G3 region. GTP contacts are provided by residues Asp81–His85 and Asn136–Asp139. Positions Asn136 to Asp139 are G4. The tract at residues Ser174–Leu176 is G5.

Belongs to the TRAFAC class translation factor GTPase superfamily. Classic translation factor GTPase family. EF-Tu/EF-1A subfamily. As to quaternary structure, monomer.

It is found in the cytoplasm. It catalyses the reaction GTP + H2O = GDP + phosphate + H(+). In terms of biological role, GTP hydrolase that promotes the GTP-dependent binding of aminoacyl-tRNA to the A-site of ribosomes during protein biosynthesis. The polypeptide is Elongation factor Tu (Aster yellows witches'-broom phytoplasma (strain AYWB)).